The primary structure comprises 1076 residues: DNA-directed RNA polymerase subunit beta (1076 aa).

The protein belongs to the RNA polymerase beta chain family. In terms of assembly, in plastids the minimal PEP RNA polymerase catalytic core is composed of four subunits: alpha, beta, beta', and beta''. When a (nuclear-encoded) sigma factor is associated with the core the holoenzyme is formed, which can initiate transcription.

It localises to the plastid. Its subcellular location is the chloroplast. The enzyme catalyses RNA(n) + a ribonucleoside 5'-triphosphate = RNA(n+1) + diphosphate. In terms of biological role, DNA-dependent RNA polymerase catalyzes the transcription of DNA into RNA using the four ribonucleoside triphosphates as substrates. This chain is DNA-directed RNA polymerase subunit beta, found in Hordeum vulgare (Barley).